Consider the following 188-residue polypeptide: ATP synthase subunit delta (188 aa).

This sequence belongs to the ATPase delta chain family. F-type ATPases have 2 components, F(1) - the catalytic core - and F(0) - the membrane proton channel. F(1) has five subunits: alpha(3), beta(3), gamma(1), delta(1), epsilon(1). F(0) has three main subunits: a(1), b(2) and c(10-14). The alpha and beta chains form an alternating ring which encloses part of the gamma chain. F(1) is attached to F(0) by a central stalk formed by the gamma and epsilon chains, while a peripheral stalk is formed by the delta and b chains.

It localises to the cell inner membrane. In terms of biological role, f(1)F(0) ATP synthase produces ATP from ADP in the presence of a proton or sodium gradient. F-type ATPases consist of two structural domains, F(1) containing the extramembraneous catalytic core and F(0) containing the membrane proton channel, linked together by a central stalk and a peripheral stalk. During catalysis, ATP synthesis in the catalytic domain of F(1) is coupled via a rotary mechanism of the central stalk subunits to proton translocation. Its function is as follows. This protein is part of the stalk that links CF(0) to CF(1). It either transmits conformational changes from CF(0) to CF(1) or is implicated in proton conduction. The polypeptide is ATP synthase subunit delta (Sinorhizobium medicae (strain WSM419) (Ensifer medicae)).